Here is a 254-residue protein sequence, read N- to C-terminus: Ribonuclease 3 (254 aa).

Residues 24-154 (LRRLQETLGV…VIGALFLDSG (131 aa)) enclose the RNase III domain. Position 67 (E67) interacts with Mg(2+). D71 is an active-site residue. Mg(2+) is bound by residues D140 and E143. Residue E143 is part of the active site. One can recognise a DRBM domain in the interval 181 to 250 (DYKSTLQVLA…ARLAWEQLSG (70 aa)).

This sequence belongs to the ribonuclease III family. As to quaternary structure, homodimer. Mg(2+) serves as cofactor.

Its subcellular location is the cytoplasm. It carries out the reaction Endonucleolytic cleavage to 5'-phosphomonoester.. Functionally, digests double-stranded RNA. Involved in the processing of primary rRNA transcript to yield the immediate precursors to the large and small rRNAs (23S and 16S). Processes some mRNAs, and tRNAs when they are encoded in the rRNA operon. Processes pre-crRNA and tracrRNA of type II CRISPR loci if present in the organism. This Treponema pallidum (strain Nichols) protein is Ribonuclease 3.